A 366-amino-acid chain; its full sequence is tRNA (guanine(26)-N(2))-dimethyltransferase (366 aa).

The segment at 1–28 (MEVSEGSVTVEVPEERHGASEGSGEGVF) is disordered. One can recognise a Trm1 methyltransferase domain in the interval 1–365 (MEVSEGSVTV…ADVADIRNAV (365 aa)). Arg-37, Arg-64, and Asp-79 together coordinate S-adenosyl-L-methionine. Positions 234, 237, 254, and 257 each coordinate Zn(2+).

Belongs to the class I-like SAM-binding methyltransferase superfamily. Trm1 family.

The enzyme catalyses guanosine(26) in tRNA + 2 S-adenosyl-L-methionine = N(2)-dimethylguanosine(26) in tRNA + 2 S-adenosyl-L-homocysteine + 2 H(+). Its function is as follows. Dimethylates a single guanine residue at position 26 of a number of tRNAs using S-adenosyl-L-methionine as donor of the methyl groups. The protein is tRNA (guanine(26)-N(2))-dimethyltransferase of Natronomonas pharaonis (strain ATCC 35678 / DSM 2160 / CIP 103997 / JCM 8858 / NBRC 14720 / NCIMB 2260 / Gabara) (Halobacterium pharaonis).